The following is a 149-amino-acid chain: UPF0178 protein SERP0336 (149 aa).

It belongs to the UPF0178 family.

This chain is UPF0178 protein SERP0336, found in Staphylococcus epidermidis (strain ATCC 35984 / DSM 28319 / BCRC 17069 / CCUG 31568 / BM 3577 / RP62A).